The sequence spans 500 residues: MSIIDTRTPEPKRFISGATGDWEVVIGMEVHAQVTSESKLFSGASTAFGAEPNSNVSLVDAAMPGMLPVINLECVRQAVRTGIGLNAQINLKSVFDRKNYFYPDLPQGYQISQFKQPIVGEGKIMISVGPDNKGQFEDVEIGIERLHLEQDAGKSMHDQHPTMSYVDLNRSGVALMEIVSKPDLRSSDEARAYLTKLRTIVRYLGTCDGNMDEGSMRADVNVSVRRPGGEFGTRCEIKNVNSIRFVGQAIEYEARRQIAILEDGGVIDQETRLFDPVKGETRSMRSKEEAHDYRYFPDPDLLPLEFDQAFVDALAAKLPELPDVKKQRLVETLGISVYDASILVTEKAIADYYEAVAEGRDGKAAANWVINDLLGALNKAGKDIEESPISPAQLGAIIDLIKEGTISGKIAKDLFEIVWNEGGDPKKLVEERGMKQVTDTGAIEKAVDDVIAANPDKVEQAKAKPTLAGWFVGQVMKATGGKANPQAVNELVKSKLGIEE.

It belongs to the GatB/GatE family. GatB subfamily. As to quaternary structure, heterotrimer of A, B and C subunits.

The enzyme catalyses L-glutamyl-tRNA(Gln) + L-glutamine + ATP + H2O = L-glutaminyl-tRNA(Gln) + L-glutamate + ADP + phosphate + H(+). It catalyses the reaction L-aspartyl-tRNA(Asn) + L-glutamine + ATP + H2O = L-asparaginyl-tRNA(Asn) + L-glutamate + ADP + phosphate + 2 H(+). Allows the formation of correctly charged Asn-tRNA(Asn) or Gln-tRNA(Gln) through the transamidation of misacylated Asp-tRNA(Asn) or Glu-tRNA(Gln) in organisms which lack either or both of asparaginyl-tRNA or glutaminyl-tRNA synthetases. The reaction takes place in the presence of glutamine and ATP through an activated phospho-Asp-tRNA(Asn) or phospho-Glu-tRNA(Gln). This is Aspartyl/glutamyl-tRNA(Asn/Gln) amidotransferase subunit B from Brucella melitensis biotype 2 (strain ATCC 23457).